Consider the following 214-residue polypeptide: RNA pyrophosphohydrolase (214 aa).

Residues 6–149 (GFRPNVGIIL…KRDVYQLALT (144 aa)) form the Nudix hydrolase domain. Residues 38 to 59 (GGIKYGETPMQAMYRELHEETG) carry the Nudix box motif.

It belongs to the Nudix hydrolase family. RppH subfamily. It depends on a divalent metal cation as a cofactor.

Functionally, accelerates the degradation of transcripts by removing pyrophosphate from the 5'-end of triphosphorylated RNA, leading to a more labile monophosphorylated state that can stimulate subsequent ribonuclease cleavage. The sequence is that of RNA pyrophosphohydrolase from Burkholderia cenocepacia (strain HI2424).